A 173-amino-acid chain; its full sequence is Insertion element IS1397 uncharacterized 20.1 kDa protein (173 aa).

The tract at residues 115–135 is disordered; it reads KSMTRSDDTHENEANMTPEEM.

Belongs to the IS150/IS1296 orfA family.

This chain is Insertion element IS1397 uncharacterized 20.1 kDa protein, found in Escherichia coli.